The following is an 857-amino-acid chain: Autoinducer 2 sensor kinase/phosphatase LuxQ (857 aa).

The next 2 membrane-spanning stretches (helical) occupy residues 20 to 40 (IIFL…YYFS) and 283 to 303 (LGLA…RSWI). Positions 490 to 712 (KMSHEIRTPL…TFYLSIPVEK (223 aa)) constitute a Histidine kinase domain. Phosphohistidine; by autocatalysis is present on His-493. The 116-residue stretch at 735-850 (KVLLVEDNHT…ELHDELLHFK (116 aa)) folds into the Response regulatory domain. Residue Asp-784 is modified to 4-aspartylphosphate.

In terms of assembly, binds the complex formed by the autoinducer and LuxP.

The protein localises to the cell inner membrane. The catalysed reaction is ATP + protein L-histidine = ADP + protein N-phospho-L-histidine.. Functionally, at low cell density, in absence of autoinducer has a kinase activity, and autophosphorylates on a histidine residue. The phosphoryl group is then transferred to an aspartate residue in the response regulator domain. The phosphoryl group is transferred to LuxU, and ultimately to LuxO. At high cell density, in the presence of autoinducer, the kinase activity is inactivated, and the response regulator domain has a phosphatase activity. The protein is Autoinducer 2 sensor kinase/phosphatase LuxQ (luxQ) of Vibrio vulnificus (strain YJ016).